Consider the following 947-residue polypeptide: Protein NLP8 (947 aa).

3 disordered regions span residues 114–135, 509–533, and 550–591; these read RSSA…ELSG, STKK…TTSS, and SMFS…EKNV. Residues 126 to 135 show a composition bias toward basic and acidic residues; the sequence is RSSDSDELSG. Composition is skewed to polar residues over residues 522 to 533 and 550 to 572; these read SDMSNFPQTTSS and SMFS…TLEQ. Basic and acidic residues predominate over residues 573–587; sequence DVSKARTPEKKKSTT. One can recognise an RWP-RK domain in the interval 577 to 671; sequence ARTPEKKKST…LDSVQGVEGG (95 aa). Residues 646 to 666 adopt a coiled-coil conformation; the sequence is RKINKVNRSLRKIQTVLDSVQ. The segment covering 805 to 815 has biased composition (low complexity); that stretch reads SCSISDSSNGS. Positions 805 to 828 are disordered; sequence SCSISDSSNGSGAVLRGSSSTSME. One can recognise a PB1 domain in the interval 847–929; sequence TLIVKASYRE…HSVKFLVRDL (83 aa).

It is found in the nucleus. Its function is as follows. Probable transcription factor. In Arabidopsis thaliana (Mouse-ear cress), this protein is Protein NLP8 (NLP8).